A 217-amino-acid chain; its full sequence is Ras-related protein RABA2a (217 aa).

Position 19-26 (glycine 19–serine 26) interacts with GTP. The short motif at serine 41–phenylalanine 49 is the Effector region element. Residues aspartate 67 to glutamine 71, asparagine 125 to aspartate 128, and serine 155 to alanine 156 each bind GTP. A lipid anchor (S-palmitoyl cysteine) is attached at cysteine 213. The residue at position 214 (cysteine 214) is a Cysteine methyl ester. Cysteine 214 is lipidated: S-geranylgeranyl cysteine. A propeptide spans serine 215 to serine 217 (removed in mature form).

This sequence belongs to the small GTPase superfamily. Rab family. As to expression, expressed in root tips.

It localises to the endosome membrane. The protein resides in the golgi apparatus. Its subcellular location is the trans-Golgi network membrane. In terms of biological role, intracellular vesicle trafficking and protein transport. The protein is Ras-related protein RABA2a (RABA2A) of Arabidopsis thaliana (Mouse-ear cress).